A 173-amino-acid chain; its full sequence is UPF0102 protein Psyc_1908 (173 aa).

This sequence belongs to the UPF0102 family.

The sequence is that of UPF0102 protein Psyc_1908 from Psychrobacter arcticus (strain DSM 17307 / VKM B-2377 / 273-4).